We begin with the raw amino-acid sequence, 82 residues long: Small ribosomal subunit protein bS18 (82 aa).

The interval 1 to 21 (MKRNNSKKVRVEPTRRPKKNP) is disordered.

The protein belongs to the bacterial ribosomal protein bS18 family. In terms of assembly, part of the 30S ribosomal subunit. Forms a tight heterodimer with protein bS6.

Its function is as follows. Binds as a heterodimer with protein bS6 to the central domain of the 16S rRNA, where it helps stabilize the platform of the 30S subunit. In Corynebacterium kroppenstedtii (strain DSM 44385 / JCM 11950 / CIP 105744 / CCUG 35717), this protein is Small ribosomal subunit protein bS18.